The primary structure comprises 542 residues: Esterase S (542 aa).

The signal sequence occupies residues 1 to 22 (MTQILLPIALLCLFAASTLSNP). Cysteines 81 and 100 form a disulfide. Asparagine 110 carries N-linked (GlcNAc...) asparagine glycosylation. The active-site Acyl-ester intermediate is the serine 204. Cysteine 256 and cysteine 268 are joined by a disulfide. Asparagine 396 carries an N-linked (GlcNAc...) asparagine glycan. A disulfide bridge links cysteine 507 with cysteine 528.

It belongs to the type-B carboxylesterase/lipase family. Monomer. Specifically expressed in the ejaculatory bulbs of male.

Its subcellular location is the secreted. The enzyme catalyses a carboxylic ester + H2O = an alcohol + a carboxylate + H(+). Its function is as follows. Transferred from the ejaculatory bulbs of males to the female genitals upon copulation, plays an important role in the reproductive biology. The sequence is that of Esterase S (EstS) from Drosophila virilis (Fruit fly).